We begin with the raw amino-acid sequence, 78 residues long: Large ribosomal subunit protein bL28 (78 aa).

Residues 1 to 21 (MSRVCQVTGKRPVSGNNRSHA) form a disordered region.

This sequence belongs to the bacterial ribosomal protein bL28 family.

This is Large ribosomal subunit protein bL28 from Serratia proteamaculans (strain 568).